The following is a 1088-amino-acid chain: RNA-directed RNA polymerase (1088 aa).

A RdRp catalytic domain is found at 501–687; sequence LSYGDVTRFL…AKRYIAGGKI (187 aa).

This sequence belongs to the reoviridae RNA-directed RNA polymerase family. In terms of assembly, interacts with VP3 (Potential). Interacts with VP2; this interaction activates VP1. Interacts with NSP5; this interaction is probably necessary for the formation of functional virus factories. Interacts with NSP2; this interaction is weak. Requires Mg(2+) as cofactor.

The protein resides in the virion. It carries out the reaction RNA(n) + a ribonucleoside 5'-triphosphate = RNA(n+1) + diphosphate. In terms of biological role, RNA-directed RNA polymerase that is involved in both transcription and genome replication. Together with VP3 capping enzyme, forms an enzyme complex positioned near the channels situated at each of the five-fold vertices of the core. Following infection, the outermost layer of the virus is lost, leaving a double-layered particle (DLP) made up of the core and VP6 shell. VP1 then catalyzes the transcription of fully conservative plus-strand genomic RNAs that are extruded through the DLP's channels into the cytoplasm where they function as mRNAs for translation of viral proteins. One copy of each of the viral (+)RNAs is also recruited during core assembly, together with newly synthesized polymerase complexes and VP2. The polymerase of these novo-formed particles catalyzes the synthesis of complementary minus-strands leading to dsRNA formation. To do so, the polymerase specifically recognizes and binds 4 bases 5'-UGUG-3' in the conserved 3'-sequence of plus-strand RNA templates. VP2 presumably activates the autoinhibited VP1-RNA complex to coordinate packaging and genome replication. Once dsRNA synthesis is complete, the polymerase switches to the transcriptional mode, thus providing secondary transcription. This chain is RNA-directed RNA polymerase, found in Homo sapiens (Human).